Reading from the N-terminus, the 275-residue chain is Large ribosomal subunit protein uL2 (275 aa).

Positions 28–38 are enriched in basic and acidic residues; the sequence is RPYEPLVETKS. Disordered stretches follow at residues 28-53 and 222-275; these read RPYEPLVETKSKSGGRNNVGRITTRH and GVAM…RSAK. Residues 254-275 show a composition bias toward basic residues; that stretch reads KGHKTRKNKRTDKMIVRRRSAK.

This sequence belongs to the universal ribosomal protein uL2 family. In terms of assembly, part of the 50S ribosomal subunit. Forms a bridge to the 30S subunit in the 70S ribosome.

In terms of biological role, one of the primary rRNA binding proteins. Required for association of the 30S and 50S subunits to form the 70S ribosome, for tRNA binding and peptide bond formation. It has been suggested to have peptidyltransferase activity; this is somewhat controversial. Makes several contacts with the 16S rRNA in the 70S ribosome. This is Large ribosomal subunit protein uL2 from Marinobacter nauticus (strain ATCC 700491 / DSM 11845 / VT8) (Marinobacter aquaeolei).